A 252-amino-acid polypeptide reads, in one-letter code: 5-oxoprolinase subunit A (252 aa).

Belongs to the LamB/PxpA family. In terms of assembly, forms a complex composed of PxpA, PxpB and PxpC.

The catalysed reaction is 5-oxo-L-proline + ATP + 2 H2O = L-glutamate + ADP + phosphate + H(+). In terms of biological role, catalyzes the cleavage of 5-oxoproline to form L-glutamate coupled to the hydrolysis of ATP to ADP and inorganic phosphate. The chain is 5-oxoprolinase subunit A from Corynebacterium glutamicum (strain R).